The sequence spans 184 residues: Elongation factor P (184 aa).

Belongs to the elongation factor P family.

Its subcellular location is the cytoplasm. It functions in the pathway protein biosynthesis; polypeptide chain elongation. Involved in peptide bond synthesis. Stimulates efficient translation and peptide-bond synthesis on native or reconstituted 70S ribosomes in vitro. Probably functions indirectly by altering the affinity of the ribosome for aminoacyl-tRNA, thus increasing their reactivity as acceptors for peptidyl transferase. In Polaromonas sp. (strain JS666 / ATCC BAA-500), this protein is Elongation factor P.